Consider the following 88-residue polypeptide: uncharacterized protein (88 aa).

The next 2 helical transmembrane spans lie at 13 to 33 (FLAF…GWGP) and 62 to 82 (WFNI…ITGI).

The protein resides in the cell membrane. This is an uncharacterized protein from Bacillus subtilis (strain 168).